The primary structure comprises 537 residues: Zinc metalloproteinase nas-23 (537 aa).

The signal sequence occupies residues 1 to 16 (MRFLILVLAGSIGIYG). A propeptide spanning residues 17-111 (VNLPKIPKLS…EQLDHSRTKR (95 aa)) is cleaved from the precursor. Asn77 is a glycosylation site (N-linked (GlcNAc...) asparagine). The region spanning 116–311 (NAMYPKTIWL…AKINRHYNCE (196 aa)) is the Peptidase M12A domain. Disulfide bonds link Cys156–Cys310, Cys178–Cys199, Cys314–Cys334, Cys336–Cys345, Cys356–Cys385, and Cys412–Cys433. His207 contacts Zn(2+). The active site involves Glu208. Residues His211 and His217 each contribute to the Zn(2+) site. The EGF-like domain occupies 306-346 (RHYNCEKNCKNKITCLNGGYQHPKNCKICVCPPGYGGSDCK). Positions 356–471 (CTGVLVAGET…VQLRYSTVDG (116 aa)) constitute a CUB domain. Asn481 carries N-linked (GlcNAc...) asparagine glycosylation.

Zn(2+) is required as a cofactor. Expressed in the hypodermis, rectum and to a lesser extent in pharyngeal muscles and intestine.

It is found in the secreted. In terms of biological role, metalloprotease. The sequence is that of Zinc metalloproteinase nas-23 (nas-23) from Caenorhabditis elegans.